Consider the following 127-residue polypeptide: Calcium-binding protein PBP1 (127 aa).

Residues 1-18 (MASPKSSTRPNQENQEPQ) are compositionally biased toward polar residues. Positions 1–20 (MASPKSSTRPNQENQEPQFQ) are disordered. The EF-hand domain occupies 72-107 (LTDDDVRYMINEGDFDRDGALNQMEFCVLMFRLSPE). Ca(2+) is bound by residues aspartate 85, aspartate 87, aspartate 89, and glutamate 96.

In terms of assembly, interacts with PID.

Functionally, potential calcium sensor that binds calcium in vitro. The protein is Calcium-binding protein PBP1 (PBP1) of Arabidopsis thaliana (Mouse-ear cress).